Consider the following 756-residue polypeptide: Cilium assembly protein DZIP1L (756 aa).

The tract at residues 1 to 20 (MLGQFSPGEPYTTSLSSTPP) is disordered. The span at 10 to 19 (PYTTSLSSTP) shows a compositional bias: low complexity. Positions 108 to 158 (DFLSSQLAGLEERLQAATSLVQQGEGQRAELEKSLQETKQENRRRKQLIAT) form a coiled coil. The C2H2-type zinc finger occupies 171–194 (HKCQFCEKSFVNYSYLQAHVQRRH). Basic and acidic residues-rich tracts occupy residues 193–202 (RHPEVTDAEK), 237–262 (NLRR…ERWK), 319–335 (DPEK…LRER), and 344–365 (RRKF…KSEN). Disordered regions lie at residues 193–212 (RHPE…EEME), 233–262 (QQAD…ERWK), 310–365 (NNAS…KSEN), 409–466 (KIKK…MRES), 531–626 (VKSL…AYIT), and 693–756 (IKTP…GTSA). Coiled-coil stretches lie at residues 196-283 (EVTD…FLQE) and 321-416 (EKEM…LSAT). Residues 534 to 558 (LQKSSGKPTPNTLKQRGKKTSTPLN) are compositionally biased toward polar residues. Positions 560–578 (KSLRFRQDSKASDRREKSQ) are enriched in basic and acidic residues. Residues 586-598 (TPTPRSKAPPPNQ) show a composition bias toward pro residues.

The protein belongs to the DZIP C2H2-type zinc-finger protein family.

It localises to the cytoplasm. Its subcellular location is the cytoskeleton. The protein localises to the cilium basal body. The protein resides in the microtubule organizing center. It is found in the centrosome. It localises to the centriole. In terms of biological role, involved in primary cilium formation. Probably acts as a transition zone protein required for localization of PKD1/PC1 and PKD2/PC2 to the ciliary membrane. The protein is Cilium assembly protein DZIP1L (dzip1l) of Danio rerio (Zebrafish).